The primary structure comprises 616 residues: Proline--tRNA ligase (616 aa).

It belongs to the class-II aminoacyl-tRNA synthetase family. ProS type 1 subfamily. As to quaternary structure, homodimer.

It localises to the cytoplasm. The catalysed reaction is tRNA(Pro) + L-proline + ATP = L-prolyl-tRNA(Pro) + AMP + diphosphate. Catalyzes the attachment of proline to tRNA(Pro) in a two-step reaction: proline is first activated by ATP to form Pro-AMP and then transferred to the acceptor end of tRNA(Pro). As ProRS can inadvertently accommodate and process non-cognate amino acids such as alanine and cysteine, to avoid such errors it has two additional distinct editing activities against alanine. One activity is designated as 'pretransfer' editing and involves the tRNA(Pro)-independent hydrolysis of activated Ala-AMP. The other activity is designated 'posttransfer' editing and involves deacylation of mischarged Ala-tRNA(Pro). The misacylated Cys-tRNA(Pro) is not edited by ProRS. This is Proline--tRNA ligase from Lactococcus lactis subsp. cremoris (strain SK11).